The following is a 249-amino-acid chain: NH(3)-dependent NAD(+) synthetase (249 aa).

Aspartate 34 serves as a coordination point for Mg(2+). Arginine 110 lines the deamido-NAD(+) pocket. Threonine 130 serves as a coordination point for ATP. Glutamate 135 is a Mg(2+) binding site. Deamido-NAD(+)-binding residues include lysine 143 and aspartate 150. Lysine 159 and serine 181 together coordinate ATP. 232–233 (HK) contributes to the deamido-NAD(+) binding site.

Belongs to the NAD synthetase family. In terms of assembly, homodimer.

The enzyme catalyses deamido-NAD(+) + NH4(+) + ATP = AMP + diphosphate + NAD(+) + H(+). Its pathway is cofactor biosynthesis; NAD(+) biosynthesis; NAD(+) from deamido-NAD(+) (ammonia route): step 1/1. Catalyzes the ATP-dependent amidation of deamido-NAD to form NAD. Uses ammonia as a nitrogen source. In Picrophilus torridus (strain ATCC 700027 / DSM 9790 / JCM 10055 / NBRC 100828 / KAW 2/3), this protein is NH(3)-dependent NAD(+) synthetase.